A 411-amino-acid chain; its full sequence is Putative odorant receptor 59c (411 aa).

Residues 1-46 are Cytoplasmic-facing; sequence MTKFFFKRLQTAPLDQEVSSLDASDYYYRIAFFLGWTPPKGALLRW. The helical transmembrane segment at 47-67 threads the bilayer; sequence IYSLWTLTTMWLGIVYLPLGL. The Extracellular segment spans residues 68 to 86; it reads SLTYVKHFDRFTPTEFLTS. The chain crosses the membrane as a helical span at residues 87-107; sequence LQVDINCIGNVIKSCVTYSQM. The Cytoplasmic segment spans residues 108–139; sequence WRFRRMNELISSLDKRCVTTTQRRIFHKMVAR. Residues 140–160 form a helical membrane-spanning segment; sequence VNLIVILFLSTYLGFCFLTLF. At 161–185 the chain is on the extracellular side; the sequence is TSVFAGKAPWQLYNPLVDWRKGHWQ. The chain crosses the membrane as a helical span at residues 186-206; the sequence is LWIASILEYCVVSIGTMQELM. Residues 207-271 lie on the Cytoplasmic side of the membrane; that stretch reads SDTYAIVFIS…QIIRPILSIT (65 aa). The chain crosses the membrane as a helical span at residues 272-292; sequence IFAQFMLVGIDLGLAAISILF. The Extracellular segment spans residues 293 to 296; it reads FPNT. The helical transmembrane segment at 297–317 threads the bilayer; sequence IWTIMANVSFIVAICTESFPC. Topologically, residues 318 to 369 are cytoplasmic; it reads CMLCEHLIEDSVHVSNALFHSNWITADRSYKSAVLYFLHRAQQPIQFTAGSI. The helical transmembrane segment at 370-390 threads the bilayer; sequence FPISVQSNIAVAKFAFTIITI. Residues 391-411 lie on the Extracellular side of the membrane; the sequence is VNQMNLGEKFFSDRSNGDINP.

This sequence belongs to the insect chemoreceptor superfamily. Heteromeric odorant receptor channel (TC 1.A.69) family. Or2a subfamily. As to quaternary structure, interacts with Orco. Complexes exist early in the endomembrane system in olfactory sensory neurons (OSNs), coupling these complexes to the conserved ciliary trafficking pathway. In terms of tissue distribution, expressed in olfactory sensory neurons in the maxillary palp.

Its subcellular location is the cell membrane. Odorant receptor which mediates acceptance or avoidance behavior, depending on its substrates. The odorant receptor repertoire encodes a large collection of odor stimuli that vary widely in identity, intensity, and duration. May form a complex with Orco to form odorant-sensing units, providing sensitive and prolonged odorant signaling and calcium permeability. The protein is Putative odorant receptor 59c (Or59c) of Drosophila melanogaster (Fruit fly).